The sequence spans 246 residues: Ly6/PLAUR domain-containing protein 4 (246 aa).

An N-terminal signal peptide occupies residues 1–26; it reads MGPQHLSPMQLLCLLGAISSLPWAEA. A glycan (N-linked (GlcNAc...) asparagine) is linked at N117. Residues 142 to 223 enclose the UPAR/Ly6 domain; sequence CPTCVGEHSK…INIVEKALFT (82 aa). A225 is lipidated: GPI-anchor amidated alanine. The propeptide at 226–246 is removed in mature form; the sequence is GTPCRSPSWGILLGLLFAFKG.

The protein resides in the cell membrane. In Bos taurus (Bovine), this protein is Ly6/PLAUR domain-containing protein 4 (LYPD4).